The primary structure comprises 750 residues: MIPKTFKEVIDLGDGREISIETGKLAKQAHGSVVVQSGKCMLLCTVVSNYEQKDLPFLPLTVDYREKFAAAGRYPGGFFKREARPSDGEVLTMRLVDRVLRPLFPKDYSAETQVMIQLMSHDDEVMPEAMAGLAASAAIQLSDFPFECAISEARVGRVNGEFIINPTRAQLAESDIEMMIGASADSVMMVEGEMDEISEEDMVEAIKFAHEAIKVQIEAQHRLADAFGRKEVREYEDAPENEDLVKKVHDMAYDKVYAVAKAGSSKKERTDAFASIKEEVKASFSEEELEEYGDLVSDYYRKAEKAAVRDLTLNEGIRLDGRKTDEVRDIWCEVDYLPSVHGSSIFTRGETQALATVTLGTSRDANQIDMPSHEGEERFYLHYNFPPFCTGEARPIRGTSRREVGHGNLAQRALKGMIPEECPYTVRVVSEVLESNGSSSMATVCAGTMALMDAGVQMKKPVSGIAMGLISDGDSGKYAVLSDILGDEDHLGDMDFKVTGTADGITACQMDIKVKGLSYEILVNALKQARDGRLHILEKLTDTIAQPNADVKAYAPKMITRRIPNEFIGALIGPGGKVIQELQKETGTTIVINEDPVTEEGIIEILGTEQEGIDKVIAKIESITFKPEKGSVYEVKVIKVLDFGAVVEYMDAPGNEVLLHISELAWERTNDVNDVLKLGDVLDVKYFGLDPKTRKDKVSRKALMEKPEGYKERAPRDRDDKRGSRDNNRGRDNRGRDNRRDDRKPRENKD.

Residues Asp489 and Asp495 each coordinate Mg(2+). The KH domain occupies 556–620 (PKMITRRIPN…EGIDKVIAKI (65 aa)). An S1 motif domain is found at 630 to 701 (GSVYEVKVIK…KTRKDKVSRK (72 aa)). A disordered region spans residues 697 to 750 (KVSRKALMEKPEGYKERAPRDRDDKRGSRDNNRGRDNRGRDNRRDDRKPRENKD). Residues 702 to 750 (ALMEKPEGYKERAPRDRDDKRGSRDNNRGRDNRGRDNRRDDRKPRENKD) are compositionally biased toward basic and acidic residues.

Belongs to the polyribonucleotide nucleotidyltransferase family. Mg(2+) serves as cofactor.

Its subcellular location is the cytoplasm. It catalyses the reaction RNA(n+1) + phosphate = RNA(n) + a ribonucleoside 5'-diphosphate. In terms of biological role, involved in mRNA degradation. Catalyzes the phosphorolysis of single-stranded polyribonucleotides processively in the 3'- to 5'-direction. This Christiangramia forsetii (strain DSM 17595 / CGMCC 1.15422 / KT0803) (Gramella forsetii) protein is Polyribonucleotide nucleotidyltransferase.